The sequence spans 37 residues: Large ribosomal subunit protein bL36 (37 aa).

It belongs to the bacterial ribosomal protein bL36 family.

The protein is Large ribosomal subunit protein bL36 of Leptospira interrogans serogroup Icterohaemorrhagiae serovar Lai (strain 56601).